A 148-amino-acid polypeptide reads, in one-letter code: UPF0756 membrane protein NGK_2061 (148 aa).

4 helical membrane passes run 10 to 32, 50 to 70, 85 to 105, and 116 to 136; these read LVTLILLGVVSNNNSITVSATIL, HGLNLGIILLTIGVLSPLVSG, MISAVFIGIFVAWLAGCGVPL, and LLIGTVIGVAFMGGIPVGPLI.

Belongs to the UPF0756 family.

The protein localises to the cell membrane. This chain is UPF0756 membrane protein NGK_2061, found in Neisseria gonorrhoeae (strain NCCP11945).